The sequence spans 233 residues: Isoprenyl transferase (233 aa).

The active site involves D12. D12 serves as a coordination point for Mg(2+). Residues G13–R16, W17, R25, H29, and S57–E59 each bind substrate. N60 (proton acceptor) is an active-site residue. Substrate-binding positions include W61, R63, R178, and R184 to S186. E197 is a binding site for Mg(2+).

Belongs to the UPP synthase family. Homodimer. Mg(2+) serves as cofactor.

In terms of biological role, catalyzes the condensation of isopentenyl diphosphate (IPP) with allylic pyrophosphates generating different type of terpenoids. The chain is Isoprenyl transferase from Thermotoga maritima (strain ATCC 43589 / DSM 3109 / JCM 10099 / NBRC 100826 / MSB8).